Consider the following 559-residue polypeptide: MTSLREFRKLCCDIYHASGYKEKSKLIRDFITDRDDTDTYLIIKLLLPGLDDRMYNMNDKQIIKLYSIIFKQSQEDMLQDLGYGYIGDTIRTFFKENTEIRPRDKSILTLEEVDSFLTTLSSVTKESHQIKLLTDIASVCTCNDLKCVVMLIDKDLKIKAGPRYVLNAISPHAYDVFRKSNNLKEIIENAAKQNLDSISISVMTPINPMLAESCDSVNKAFKKFPSGMFAEVKYDGERVQVHKKNNEFAFFSRNMKPVLSHKVDYLKEYIPKAFKKATSIVLDSEIVLVDEHNVPLPFGSLGIHKKKEYKNSNMCLFVFDCLYFDGFDMTDIPLYERRSFLKDVMVEIPNRIVFSELTNISNESQLTDVLDDALTRKLEGLVLKDINGVYEPGKRRWLKIKRDYLNEGSMADSADLVVLGAYYGKGGKGGIMAVFLMGCYDDESGKWKTVTKCSGHDDNTLRVLQDQLTMVKINKDPKKIPEWLVVNKIYIPDFVVDDPKQSQIWEISGAEFTSSKSHTANGISIRFPRFTRIREDKTWKESTHLNDLVNLTKSLNSYI.

Glu231 contributes to the ATP binding site. Lys233 acts as the N6-AMP-lysine intermediate in catalysis. 2 residues coordinate ATP: Arg238 and Glu285. Mg(2+)-binding residues include Glu285 and Glu379. Residues Lys384 and Lys399 each contribute to the ATP site.

This sequence belongs to the ATP-dependent DNA ligase family. Interacts with host TOP2A and TOP2B. Requires Mg(2+) as cofactor.

The protein localises to the host cytoplasm. It catalyses the reaction ATP + (deoxyribonucleotide)n-3'-hydroxyl + 5'-phospho-(deoxyribonucleotide)m = (deoxyribonucleotide)n+m + AMP + diphosphate.. In terms of biological role, DNA ligase that seals nicks in double-stranded DNA during DNA replication, DNA recombination and DNA repair. Recruits cellular topoisomerase II to sites of viral replication and assembly. The polypeptide is DNA ligase (OPG180) (Monkeypox virus).